Here is a 610-residue protein sequence, read N- to C-terminus: Diol dehydratase-reactivating factor large subunit (610 aa).

11–13 (NSS) is a binding site for ATP. Mg(2+)-binding residues include Thr105, Asp166, and Asp183. Residues 459–462 (EEIK), 557–558 (GS), and Arg591 each bind ATP.

Belongs to the DdrA/PduG family. As to quaternary structure, component of the DDR complex, a heterotetramer of DdrA(2)/DdrB(2). The DDR complex interacts with the diol dehydratase complex in the presence of ADP but not ATP. It depends on Mg(2+) as a cofactor.

The catalysed reaction is ATP + H2O = ADP + phosphate + H(+). In terms of biological role, large subunit of the diol dehydratase-reactivating factor (DDR), which reactivates suicidally inhibited adenosylcobalamin-dependent diol dehydratase (DD, pddA, pddB, pddC). DDR acts as a chaperone, reactivating inactivated DD holoenzyme in the presence of ATP, Mg(2+) and free adenosylcobalamin (AdoCbl), by mediating the exchange of the tightly bound damaged cofactor AdoCbl for a free intact one. Reactivation takes place in two steps: ADP-dependent cobalamin release, then ATP-dependent dissociation of the DD apoenzyme-DDR complex. DDR has weak ATPase activity which is required for DD reactivation. This subunit contains the adenosine nucleotide binding site. Activates glycerol-inactivated, O2-inactivated holoenzyme and inactivated enzyme-cyanocobalamin complex. Also reactivates glycerol-inactivated hologlycerol dehydratase, a DD isozyme. The sequence is that of Diol dehydratase-reactivating factor large subunit from Klebsiella michiganensis (strain ATCC 8724 / DSM 4798 / JCM 20051 / NBRC 3318 / NRRL B-199 / KCTC 1686 / BUCSAV 143 / CCM 1901).